The chain runs to 396 residues: L-lactate dehydrogenase (396 aa).

The 380-residue stretch at 1–380 (MIISAASDYR…TQDSLVQGLG (380 aa)) folds into the FMN hydroxy acid dehydrogenase domain. Tyrosine 24 contributes to the substrate binding site. 2 residues coordinate FMN: serine 106 and glutamine 127. Tyrosine 129 contacts substrate. Threonine 155 contacts FMN. Arginine 164 is a substrate binding site. Lysine 251 lines the FMN pocket. The active-site Proton acceptor is histidine 275. A substrate-binding site is contributed by arginine 278. An FMN-binding site is contributed by 306-330 (DSGIRNGLDVVRMIALGADTVLLGR).

It belongs to the FMN-dependent alpha-hydroxy acid dehydrogenase family. Requires FMN as cofactor.

It localises to the cell inner membrane. It carries out the reaction (S)-lactate + A = pyruvate + AH2. Its function is as follows. Catalyzes the conversion of L-lactate to pyruvate. Is coupled to the respiratory chain. The sequence is that of L-lactate dehydrogenase from Shigella boydii serotype 4 (strain Sb227).